The chain runs to 196 residues: C-type lectin domain family 2 member F (196 aa).

Residues 1-21 (MNAQCLKKPEEGESSPGTGDK) are disordered. Residues 1–41 (MNAQCLKKPEEGESSPGTGDKILQRNSLRAISPESSAKLYC) are Cytoplasmic-facing. A helical; Signal-anchor for type II membrane protein membrane pass occupies residues 42 to 62 (CCGVIMVLTVAVVALSVALPA). Residues 63–196 (TKTEQILINK…SRSSNYMLQC (134 aa)) are Extracellular-facing. Residues C77 and C88 are joined by a disulfide bond. Positions 84–187 (VGNKCFYFSE…DYIPRKWICS (104 aa)) constitute a C-type lectin domain. An N-linked (GlcNAc...) asparagine glycan is attached at N97. The cysteines at positions 105 and 186 are disulfide-linked.

It is found in the cell membrane. In terms of biological role, lectin-type cell surface receptor. The protein is C-type lectin domain family 2 member F (Clec2f) of Mus musculus (Mouse).